The sequence spans 336 residues: Ornithine carbamoyltransferase, catabolic (336 aa).

Carbamoyl phosphate contacts are provided by residues 57–60 (STRT), glutamine 84, arginine 108, and 135–138 (HPTQ). L-ornithine-binding positions include asparagine 168, aspartate 232, and 236 to 237 (SM). Residues 274-275 (CL) and arginine 321 each bind carbamoyl phosphate.

The protein belongs to the aspartate/ornithine carbamoyltransferase superfamily. OTCase family.

The protein resides in the cytoplasm. It catalyses the reaction carbamoyl phosphate + L-ornithine = L-citrulline + phosphate + H(+). It participates in amino-acid degradation; L-arginine degradation via ADI pathway; carbamoyl phosphate from L-arginine: step 2/2. Reversibly catalyzes the transfer of the carbamoyl group from carbamoyl phosphate (CP) to the N(epsilon) atom of ornithine (ORN) to produce L-citrulline. The sequence is that of Ornithine carbamoyltransferase, catabolic (arcB) from Pseudomonas putida (strain ATCC 47054 / DSM 6125 / CFBP 8728 / NCIMB 11950 / KT2440).